Consider the following 342-residue polypeptide: L-threonine 3-dehydrogenase (342 aa).

A Zn(2+)-binding site is contributed by cysteine 38. Catalysis depends on charge relay system residues threonine 40 and histidine 43. Zn(2+)-binding residues include histidine 63, glutamate 64, cysteine 93, cysteine 96, cysteine 99, and cysteine 107. NAD(+)-binding positions include isoleucine 175, aspartate 195, arginine 200, 262-264 (LGI), and 286-287 (IY).

This sequence belongs to the zinc-containing alcohol dehydrogenase family. In terms of assembly, homotetramer. It depends on Zn(2+) as a cofactor.

It localises to the cytoplasm. It catalyses the reaction L-threonine + NAD(+) = (2S)-2-amino-3-oxobutanoate + NADH + H(+). It participates in amino-acid degradation; L-threonine degradation via oxydo-reductase pathway; glycine from L-threonine: step 1/2. In terms of biological role, catalyzes the NAD(+)-dependent oxidation of L-threonine to 2-amino-3-ketobutyrate. This chain is L-threonine 3-dehydrogenase, found in Aeromonas hydrophila subsp. hydrophila (strain ATCC 7966 / DSM 30187 / BCRC 13018 / CCUG 14551 / JCM 1027 / KCTC 2358 / NCIMB 9240 / NCTC 8049).